A 68-amino-acid polypeptide reads, in one-letter code: UPF0253 protein VFMJ11_0680 (68 aa).

The protein belongs to the UPF0253 family.

In Aliivibrio fischeri (strain MJ11) (Vibrio fischeri), this protein is UPF0253 protein VFMJ11_0680.